A 1772-amino-acid chain; its full sequence is Helicase SWR1 (1772 aa).

2 disordered regions span residues 1–170 (MSKR…LTPL) and 282–402 (AVEE…PYDV). The segment covering 7–19 (DLATTHANGSVDS) has biased composition (polar residues). The segment covering 61 to 71 (RQATQQQQAPG) has biased composition (low complexity). The span at 107-121 (TPKKTPSRRNGRRRS) shows a compositional bias: basic residues. 2 stretches are compositionally biased toward acidic residues: residues 126–163 (EVEEEEPEEEEGPEEEEAPEEEVEGDDEEEVQVEEEAE) and 282–323 (AVEE…QEEE). A compositionally biased stretch (basic residues) spans 338-379 (AKGKSKTASKTSKSKSKASSKSKSKSKGKGQARASKLSKSRR). In terms of domain architecture, HSA spans 536 to 609 (GFNDPERSTR…AKLLKTMARK (74 aa)). The interval 656-854 (LEARVRGDND…EKADTEVDRK (199 aa)) is disordered. Composition is skewed to acidic residues over residues 665–695 (DTPETEEGEKEEVEAVSDDAMSDVDMEDDRE), 727–757 (AEEEDEEDEENGDDEDEDEEEDDAEIEEETE), 770–800 (PAEEDEFSSDTDITLDSEDESSSEQESDYEA), and 818–847 (EEDEEEDDAFVIKEEEEEVEVEDDEEEEKA). In terms of domain architecture, Helicase ATP-binding spans 921 to 1086 (AGLYNNDTNG…WSLLYFLMPS (166 aa)). 934–941 (DEMGLGKT) serves as a coordination point for ATP. Residues 1037-1040 (DEAH) carry the DEAH box motif. One can recognise a Helicase C-terminal domain in the interval 1470–1623 (KLQRLATLLQ…NVVIQDGEFT (154 aa)). The tract at residues 1681-1757 (TNLDVEDFDE…SDESDSGIGH (77 aa)) is disordered. The segment covering 1740–1752 (GGDDDDSDSDESD) has biased composition (acidic residues).

The protein belongs to the SNF2/RAD54 helicase family. SWR1 subfamily. As to quaternary structure, component of the SWR1 chromatin-remodeling complex.

The protein localises to the nucleus. It catalyses the reaction ATP + H2O = ADP + phosphate + H(+). Its function is as follows. Catalytic component of the SWR1 complex which mediates the ATP-dependent exchange of histone H2A for the H2A variant HZT1 leading to transcriptional regulation of selected genes by chromatin remodeling. The sequence is that of Helicase SWR1 (SWR1) from Yarrowia lipolytica (strain CLIB 122 / E 150) (Yeast).